The chain runs to 218 residues: uncharacterized protein (218 aa).

Transmembrane regions (helical) follow at residues 19 to 39 (VFGF…FTII), 92 to 112 (FDYA…VSAV), 124 to 144 (YGLI…MILA), 161 to 181 (LLFE…IAPF), and 196 to 216 (YILM…EILL).

The protein resides in the cell membrane. This is an uncharacterized protein from Methanocaldococcus jannaschii (strain ATCC 43067 / DSM 2661 / JAL-1 / JCM 10045 / NBRC 100440) (Methanococcus jannaschii).